Consider the following 564-residue polypeptide: MESEQPAAVKASAPIEEPQSTETAVELGKHSTLKADLSIDKLETATTEATNAVVEPVEMEQQVENELVNESTQAMTSTTTQEKVVGSVNNLVEEQQCVEMEFETSSDLVVQGSPSEESKKVASDASATVTAPQVQPAPHVDSSPQASGLSLLAAYSSDDSDDEKVTPVQNGDNDVIEVPVTDPASSTTAYRPVVAVSSDDESSKSSSSSSDSDSDSEGEYLTVLRKKIDKRINTVDCDEDDEDFDEDGATGDRSRRRQPPKVRGEMLLDDLPPIHQLEITVPEDECVELGKVQSIVDQLVLVSVLPNSMLFDLDTVLFLEKGRKVLGEVFDVLGQVSDPLYCVRFNSNKQILDRGIKIGDVVYCAPKTEHTQFVILSKLMQVRGSDASWEHDVEPPARYVDHSDDEEEREARAEQRKRRQRDRTNSTDSVDTVTSVATTATKASSVAPPPRQRGRRGQRESFRQSQRPSINQHNQNQPQDEQYNFHPSYNPGSWHSNYYQNYHQAAANFNMAQQHPGMPFPVPNYGYGMPYAMPPMYPHMYPPPPPFAPPPPNNQSHQGQPPPS.

Disordered regions lie at residues 1-29 (MESE…ELGK), 108-218 (LVVQ…DSEG), 238-264 (DEDD…KVRG), 387-489 (ASWE…HPSY), and 538-564 (PHMY…PPPS). Positions 146–157 (ASGLSLLAAYSS) are enriched in low complexity. Over residues 238–249 (DEDDEDFDEDGA) the composition is skewed to acidic residues. Threonine 250 carries the post-translational modification Phosphothreonine. Residue serine 254 is modified to Phosphoserine. The segment covering 388–402 (SWEHDVEPPARYVDH) has biased composition (basic and acidic residues). Serine 403 is subject to Phosphoserine. Low complexity predominate over residues 426–446 (STDSVDTVTSVATTATKASSV). Threonine 427 is subject to Phosphothreonine. At serine 429 the chain carries Phosphoserine. Threonine 432 is modified (phosphothreonine). A compositionally biased stretch (polar residues) spans 468-489 (PSINQHNQNQPQDEQYNFHPSY). A compositionally biased stretch (pro residues) spans 538 to 553 (PHMYPPPPPFAPPPPN). Residues 554-564 (NQSHQGQPPPS) show a composition bias toward polar residues.

The protein belongs to the NAF1 family. As to quaternary structure, during assembly of the complex, component of the box H/ACA small nucleolar ribonucleoprotein (H/ACA snoRNP) complex.

The protein resides in the nucleus. RNA-binding protein required for the maturation of the box H/ACA small nucleolar ribonucleoprotein (H/ACA snoRNP) complex and ribosome biogenesis. During assembly of the H/ACA snoRNP complex it associates with the complex and dissociates during complex maturation, becoming replaced by Gar1 to yield mature H/ACA snoRNP complex. The chain is H/ACA ribonucleoprotein complex non-core subunit NAF1 from Drosophila melanogaster (Fruit fly).